Reading from the N-terminus, the 320-residue chain is tRNA dimethylallyltransferase (320 aa).

14 to 21 lines the ATP pocket; the sequence is GPTASGKT. Residue 16–21 coordinates substrate; it reads TASGKT. Interaction with substrate tRNA stretches follow at residues 39 to 42 and 163 to 167; these read DSAL and QRLQR.

This sequence belongs to the IPP transferase family. Monomer. Mg(2+) is required as a cofactor.

The catalysed reaction is adenosine(37) in tRNA + dimethylallyl diphosphate = N(6)-dimethylallyladenosine(37) in tRNA + diphosphate. Catalyzes the transfer of a dimethylallyl group onto the adenine at position 37 in tRNAs that read codons beginning with uridine, leading to the formation of N6-(dimethylallyl)adenosine (i(6)A). This is tRNA dimethylallyltransferase from Thioalkalivibrio sulfidiphilus (strain HL-EbGR7).